A 351-amino-acid polypeptide reads, in one-letter code: DNA polymerase IV (351 aa).

One can recognise a UmuC domain in the interval 4-185 (IIHIDMDCFF…LPLAKIPGVG (182 aa)). 2 residues coordinate Mg(2+): D8 and D103. Residue E104 is part of the active site.

Belongs to the DNA polymerase type-Y family. Monomer. It depends on Mg(2+) as a cofactor.

The protein localises to the cytoplasm. The catalysed reaction is DNA(n) + a 2'-deoxyribonucleoside 5'-triphosphate = DNA(n+1) + diphosphate. Poorly processive, error-prone DNA polymerase involved in untargeted mutagenesis. Copies undamaged DNA at stalled replication forks, which arise in vivo from mismatched or misaligned primer ends. These misaligned primers can be extended by PolIV. Exhibits no 3'-5' exonuclease (proofreading) activity. May be involved in translesional synthesis, in conjunction with the beta clamp from PolIII. The chain is DNA polymerase IV from Salmonella paratyphi A (strain ATCC 9150 / SARB42).